A 391-amino-acid polypeptide reads, in one-letter code: Phosphoglycerate kinase (391 aa).

Residues 21–23 (DLN), arginine 36, 59–62 (HRGR), arginine 113, and arginine 146 contribute to the substrate site. Residues lysine 197, glutamate 314, and 340 to 343 (GGDT) contribute to the ATP site.

It belongs to the phosphoglycerate kinase family. Monomer.

The protein localises to the cytoplasm. The catalysed reaction is (2R)-3-phosphoglycerate + ATP = (2R)-3-phospho-glyceroyl phosphate + ADP. It functions in the pathway carbohydrate degradation; glycolysis; pyruvate from D-glyceraldehyde 3-phosphate: step 2/5. In Ruthia magnifica subsp. Calyptogena magnifica, this protein is Phosphoglycerate kinase.